Consider the following 593-residue polypeptide: Cysteine/serine-rich nuclear protein 1 (593 aa).

Disordered regions lie at residues 1–66 (MTGL…RDFC), 313–392 (FREL…GVDD), and 478–497 (REGSLPGTSVPPSMDAGQSS). Composition is skewed to low complexity over residues 17 to 46 (SSVSSSSSSSSSSSGCQSLSCSPSSSVSRA) and 351 to 372 (SCSSDMTDSSTASSSASGTSGA).

The protein belongs to the AXUD1 family.

It is found in the nucleus. Binds to the consensus sequence 5'-AGAGTG-3' and has transcriptional activator activity. May have a tumor-suppressor function. May play a role in apoptosis. The chain is Cysteine/serine-rich nuclear protein 1 (CSRNP1) from Pongo abelii (Sumatran orangutan).